Reading from the N-terminus, the 547-residue chain is Sodium-coupled neutral amino acid transporter 4 (547 aa).

At 1 to 104 (MDPIELRSVN…GLSYAMANTG (104 aa)) the chain is on the extracellular side. Ser-49 bears the Phosphoserine mark. The helical transmembrane segment at 105–125 (IVLFVIMLLTVAILSLYSVHL) threads the bilayer. Over 126 to 151 (LLKTAKEGGSLIYEKLGEKAFGWPGK) the chain is Cytoplasmic. A helical membrane pass occupies residues 152 to 172 (IGAFISITMQNIGAMSSYLFI). At 173–195 (IKYELPEVIRVFMGLEENTGEWY) the chain is on the extracellular side. The helical transmembrane segment at 196–216 (LNGNYLVLFVSVGIILPLSLL) threads the bilayer. Topologically, residues 217 to 220 (KNLG) are cytoplasmic. Residues 221–241 (YLGYTSGFSLTCMVFFVSVVI) traverse the membrane as a helical segment. The Extracellular segment spans residues 242-332 (YKKFQIPCPL…PKYFVFNSRT (91 aa)). A disulfide bond links Cys-249 and Cys-321. 3 N-linked (GlcNAc...) asparagine glycosylation sites follow: Asn-260, Asn-264, and Asn-276. The helical transmembrane segment at 333 to 353 (AYAIPILAFAFVCHPEVLPIY) threads the bilayer. The Cytoplasmic portion of the chain corresponds to 354–369 (SELKDRSRRKMQTVSN). The helical transmembrane segment at 370–390 (ISITGMLVMYLLAALFGYLSF) threads the bilayer. Residues 391–411 (YGEVEDELLHAYSKVYTFDTA) lie on the Extracellular side of the membrane. A helical membrane pass occupies residues 412–432 (LLMVRLAVLVAVTLTVPIVLF). Residues 433 to 453 (PIRTSVITLLFPRRPFSWVKH) are Cytoplasmic-facing. Residues 454 to 474 (FGIAAIIIALNNVLVILVPTI) traverse the membrane as a helical segment. Residues 475-476 (KY) are Extracellular-facing. The chain crosses the membrane as a helical span at residues 477–497 (IFGFIGASSATMLIFILPAAF). Over 498–514 (YLKLVKKEPLRSPQKIG) the chain is Cytoplasmic. The chain crosses the membrane as a helical span at residues 515 to 535 (ALVFLVTGIIFMMGSMALIII). The Extracellular portion of the chain corresponds to 536–547 (DWIYNPPNPDHH).

The protein belongs to the amino acid/polyamine transporter 2 family. In terms of processing, the disulfide bond plays an important role in substrate transport, but has no effect on trafficking to the cell surface. In terms of tissue distribution, expressed predominantly in liver, and at lower level in skeletal muscle.

The protein localises to the cell membrane. It localises to the cell projection. Its subcellular location is the microvillus membrane. It carries out the reaction L-alanine(in) + Na(+)(in) = L-alanine(out) + Na(+)(out). The enzyme catalyses L-serine(in) + Na(+)(in) = L-serine(out) + Na(+)(out). It catalyses the reaction glycine(in) + Na(+)(in) = glycine(out) + Na(+)(out). The catalysed reaction is L-cysteine(in) + Na(+)(in) = L-cysteine(out) + Na(+)(out). It carries out the reaction L-asparagine(in) + Na(+)(in) = L-asparagine(out) + Na(+)(out). The enzyme catalyses L-threonine(in) + Na(+)(in) = L-threonine(out) + Na(+)(out). It catalyses the reaction L-proline(in) + Na(+)(in) = L-proline(out) + Na(+)(out). The catalysed reaction is L-methionine(in) + Na(+)(in) = L-methionine(out) + Na(+)(out). It carries out the reaction L-glutamine(in) + Na(+)(in) = L-glutamine(out) + Na(+)(out). The enzyme catalyses L-histidine(in) + Na(+)(in) = L-histidine(out) + Na(+)(out). Symporter that cotransports neutral amino acids and sodium ions from the extraccellular to the intracellular side of the cell membrane. The transport is electrogenic, pH dependent and partially tolerates substitution of Na(+) by Li(+). Preferentially transports smaller amino acids, such as glycine, L-alanine, L-serine, L-asparagine and L-threonine, followed by L-cysteine, L-histidine, L-proline and L-glutamine and L-methionine. The polypeptide is Sodium-coupled neutral amino acid transporter 4 (Rattus norvegicus (Rat)).